Reading from the N-terminus, the 342-residue chain is D-alanine--D-alanine ligase (342 aa).

Positions 132–326 constitute an ATP-grasp domain; that stretch reads KLYAKECGIE…VAKHLPKSKN (195 aa). 159 to 210 contacts ATP; that stretch reads EYPVIIKPNHLGSSIGVSVVYDSSELEYALDVAFEFDDEVLIEPFIEGIEEY. Residues Asp-282, Glu-294, and Asn-296 each coordinate Mg(2+).

This sequence belongs to the D-alanine--D-alanine ligase family. Mg(2+) is required as a cofactor. The cofactor is Mn(2+).

It is found in the cytoplasm. It carries out the reaction 2 D-alanine + ATP = D-alanyl-D-alanine + ADP + phosphate + H(+). The protein operates within cell wall biogenesis; peptidoglycan biosynthesis. In terms of biological role, cell wall formation. The sequence is that of D-alanine--D-alanine ligase from Nitratiruptor sp. (strain SB155-2).